The following is a 608-amino-acid chain: Nuclear receptor subfamily 2 group C member 1 (608 aa).

The interval 1–179 (MASIEEIAHQ…RLQRCIAFGM (179 aa)) is required for interaction with KAT2B. The nuclear receptor DNA-binding region spans 111 to 186 (FDLCVVCGDK…FGMKQDSVQC (76 aa)). 2 NR C4-type zinc fingers span residues 114 to 134 (CVVC…CEGC) and 150 to 169 (CRGS…CQYC). 2 positions are modified to phosphoserine: Ser-198 and Ser-216. Phosphothreonine is present on Thr-221. At Thr-223 the chain carries Phosphothreonine; by MAPK1. A Glycyl lysine isopeptide (Lys-Gly) (interchain with G-Cter in SUMO); alternate cross-link involves residue Lys-251. A Glycyl lysine isopeptide (Lys-Gly) (interchain with G-Cter in SUMO2); alternate cross-link involves residue Lys-251. In terms of domain architecture, NR LBD spans 353 to 595 (GNVHLIAGDS…SVIPHILKME (243 aa)). A Phosphoserine; by PKC modification is found at Ser-586. Residues 589–608 (PHILKMEPADYNSQIIGHSI) are required for interaction with NRIP1. A Glycyl lysine isopeptide (Lys-Gly) (interchain with G-Cter in SUMO2) cross-link involves residue Lys-593.

It belongs to the nuclear hormone receptor family. NR2 subfamily. In terms of assembly, homodimer. Heterodimer; with NR2C2 which is required for chromatin remodeling and for binding to promoter regions such as globin DR1 repeats. Interacts with ESR1; the interaction prevents homodimerization of ESR1 and suppresses its transcriptional activity and cell growth. Interacts with NRIP1 (via its LXXLL motifs); the interaction provides corepressor activity. Interacts with HDAC3 (via the DNA-binding domain); the interaction recruits phosphorylated NR2C1 to PML bodies for sumoylation. Interacts with HDAC4 (via the DNA-binding domain). Interacts with PIAS1; the interaction is required for sumoylation of NR2C1. Interacts with UBE2I; the interaction is required for sumoylation of NR2C1. Interacts with KAT2B; the interaction acts as a corepressor of gene expression. Post-translationally, sumoylation requires both PIAS1 and UBE2I. Sumoylation appears to dissociate NR2C1 from the PML nuclear bodies. Enhances the interaction with NRIP1 but inhibits interaction with KAT2B. In proliferating cells, stimulation by all-trans retinoic acid, activation of MAPK1-mediated phosphorylation and recruitment to PML bodies with subsequent sumoylation, suppresses OCT4 expression. In terms of processing, phosphorylated on several serine and threonine residues. Phosphorylation on Thr-223, stimulated by all-trans retinoic acid (atRA) mediates PML location and sumoylation in proliferating cells which then modulates its association with effector molecules, KAT2B and NRIP1. Phosphorylation on Ser-586 by PKC is important for protein stability and function as activator of RARB.

It is found in the nucleus. The protein localises to the PML body. In terms of biological role, orphan nuclear receptor. Binds the IR7 element in the promoter of its own gene in an autoregulatory negative feedback mechanism. Primarily repressor of a broad range of genes including ESR1 and RARB. Together with NR2C2, forms the core of the DRED (direct repeat erythroid-definitive) complex that represses embryonic and fetal globin transcription. Binds to hormone response elements (HREs) consisting of two 5'-AGGTCA-3' half site direct repeat consensus sequences. Also activator of OCT4 gene expression. Plays a fundamental role in early embryogenesis and regulates embryonic stem cell proliferation and differentiation. Mediator of retinoic acid-regulated preadipocyte proliferation. This is Nuclear receptor subfamily 2 group C member 1 (NR2C1) from Bos taurus (Bovine).